The chain runs to 404 residues: Glycosylated lysosomal membrane protein B (404 aa).

A signal peptide spans 1–24 (MSCTRGWRLILLGLLCVGLLGTRG). Residues 25–364 (QDESRKVSVQ…YGDPPRDSFS (340 aa)) lie on the Lumenal side of the membrane. N-linked (GlcNAc...) asparagine glycosylation is found at asparagine 85, asparagine 124, asparagine 128, asparagine 142, asparagine 152, asparagine 156, asparagine 163, asparagine 168, asparagine 178, asparagine 189, asparagine 205, asparagine 221, asparagine 266, asparagine 303, and asparagine 330. The helical transmembrane segment at 365–385 (ILVICIMAVALGTPLLLLIIG) threads the bilayer. Over 386-404 (TVLVTAVRHKVYPNYQPIN) the chain is Cytoplasmic. Positions 400 to 404 (YQPIN) match the Lysosomal targeting motif motif.

It belongs to the GLMP family. In terms of assembly, interacts (via lumenal domain) with lysosomal protein MFSD1; the interaction starts while both proteins are still in the endoplasmic reticulum and is required for stabilization of MFSD1 in lysosomes but has no direct effect on its targeting to lysosomes or transporter activity.

Its subcellular location is the lysosome membrane. Functionally, required to protect lysosomal transporter MFSD1 from lysosomal proteolysis and for MFSD1 lysosomal localization. This Xenopus laevis (African clawed frog) protein is Glycosylated lysosomal membrane protein B (glmp-b).